The primary structure comprises 907 residues: Lipoxygenase 1, chloroplastic (907 aa).

Residues 1-49 (MALAKQIMGASLMDQKTSVFGSNLCLNHVLVNKHRLRLRKTRKNGSMVV) constitute a chloroplast transit peptide. The PLAT domain maps to 85-209 (DFFKDTIFRK…DLPNPRIFFT (125 aa)). The Lipoxygenase domain maps to 212 to 907 (PYLPDETPVG…CRGVPNSISI (696 aa)). Fe cation-binding residues include His567, His572, His758, Asn762, and Ile907.

The protein belongs to the lipoxygenase family. Requires Fe cation as cofactor. As to expression, confined to glandular trichomes in flowers, and, at low levels, in leaves.

It localises to the plastid. The protein localises to the chloroplast. It catalyses the reaction (9Z,12Z,15Z)-octadecatrienoate + O2 = 13-hydroperoxy-(9Z,11E,15Z)-octadecatrienoate. It participates in lipid metabolism; oxylipin biosynthesis. The protein operates within isoprenoid biosynthesis. In terms of biological role, component of the monoterpenoid pyrethrins biosynthesis; pyrethrins are widely used plant-derived pesticide. Plant lipoxygenases may be involved in a number of diverse aspects of plant physiology including growth and development, pest resistance, and senescence or responses to wounding. Catalyzes the hydroperoxidation of lipids containing a cis,cis-1,4-pentadiene structure. Mediates the peroxidation of linolenic acid leading to the production of 13-hydroperoxylinolenic acid. This Tanacetum cinerariifolium (Dalmatian daisy) protein is Lipoxygenase 1, chloroplastic.